Here is a 393-residue protein sequence, read N- to C-terminus: NAD(P)H-quinone oxidoreductase subunit H, chloroplastic (393 aa).

It belongs to the complex I 49 kDa subunit family. As to quaternary structure, NDH is composed of at least 16 different subunits, 5 of which are encoded in the nucleus.

The protein localises to the plastid. It localises to the chloroplast thylakoid membrane. It carries out the reaction a plastoquinone + NADH + (n+1) H(+)(in) = a plastoquinol + NAD(+) + n H(+)(out). The enzyme catalyses a plastoquinone + NADPH + (n+1) H(+)(in) = a plastoquinol + NADP(+) + n H(+)(out). Its function is as follows. NDH shuttles electrons from NAD(P)H:plastoquinone, via FMN and iron-sulfur (Fe-S) centers, to quinones in the photosynthetic chain and possibly in a chloroplast respiratory chain. The immediate electron acceptor for the enzyme in this species is believed to be plastoquinone. Couples the redox reaction to proton translocation, and thus conserves the redox energy in a proton gradient. The chain is NAD(P)H-quinone oxidoreductase subunit H, chloroplastic from Acorus calamus var. americanus (American sweet flag).